The primary structure comprises 153 residues: Fucose mutarotase (153 aa).

The Proton donor role is filled by histidine 24. Aspartate 32 provides a ligand contact to substrate. Aspartate 69 is a catalytic residue. Substrate contacts are provided by methionine 79, tyrosine 120, tyrosine 138, and asparagine 140. The active site involves tyrosine 120.

Belongs to the RbsD / FucU family. Mainly homodimer, but also exists as homotetramer, homooctamer, and homodecamer. The homodimeric form seems catalytically inactive. As to expression, widely expressed in various tissues and cell lines, including kidney, liver, and pancreas, marginally in muscle and testis.

It carries out the reaction alpha-L-fucose = beta-L-fucose. Its pathway is carbohydrate metabolism; L-fucose metabolism. Its function is as follows. Involved in the interconversion between alpha- and beta-L-fucoses. L-Fucose (6-deoxy-L-galactose) exists as alpha-L-fucose (29.5%) and beta-L-fucose (70.5%), the beta-form is metabolized through the salvage pathway. GDP-L-fucose formed either by the de novo or salvage pathways is transported into the endoplasmic reticulum, where it serves as a substrate for N- and O-glycosylations by fucosyltransferases. Fucosylated structures expressed on cell surfaces or secreted in biological fluids are believed to play a critical role in cell-cell adhesion and recognition processes. In Mus musculus (Mouse), this protein is Fucose mutarotase (Fuom).